The primary structure comprises 34 residues: Photosystem II reaction center protein M (34 aa).

The helical transmembrane segment at 5–25 (ILAFIATALFILVPTAFLLII) threads the bilayer.

Belongs to the PsbM family. In terms of assembly, PSII is composed of 1 copy each of membrane proteins PsbA, PsbB, PsbC, PsbD, PsbE, PsbF, PsbH, PsbI, PsbJ, PsbK, PsbL, PsbM, PsbT, PsbX, PsbY, PsbZ, Psb30/Ycf12, at least 3 peripheral proteins of the oxygen-evolving complex and a large number of cofactors. It forms dimeric complexes.

The protein localises to the plastid. It is found in the chloroplast thylakoid membrane. Its function is as follows. One of the components of the core complex of photosystem II (PSII). PSII is a light-driven water:plastoquinone oxidoreductase that uses light energy to abstract electrons from H(2)O, generating O(2) and a proton gradient subsequently used for ATP formation. It consists of a core antenna complex that captures photons, and an electron transfer chain that converts photonic excitation into a charge separation. This subunit is found at the monomer-monomer interface. The polypeptide is Photosystem II reaction center protein M (Cucumis sativus (Cucumber)).